The primary structure comprises 426 residues: MLKEPSVRLREAIIEGNLLIVKRLLRRNPDLLTNIDSENGWSSLHYASYHGRYLICVYLIQLGHDKHELIKTFKGNTCVHLALMKGHEQTLHLLLQQFPRFINHRGENGRAPIHIACMNDYYQCLSLLIGVGADLWVMDTNGDTPLHVCLEYGSISCMKMLLNEGEVSLDDNVRDKGNWKPIDVAQTFEVGNIYSKVLKEVKKKGPPLGAGKKPSSFRTPILNAKATFEDGPSPVLSMNSPYSLYSNNSPLPVLPRRISTHTTSGNGGNRRSSITNPVFNPRKPTLSTDSFSSSSNSSSRLRVNSINVKTPVGVSPKKELVSESVRHSATPTSPHNNIALINRYLLPNKSNDNVRGDSQTATINDDGGGGNGGDATIGMGLRKDPDDENENKYKIKVNNGEPRRRVSLLNIPISKLRNSNNTRAED.

5 ANK repeats span residues 4–33, 39–68, 74–104, 108–137, and 141–171; these read EPSVRLREAIIEGNLLIVKRLLRRNPDLLT, NGWSSLHYASYHGRYLICVYLIQLGHDKHE, KGNTCVHLALMKGHEQTLHLLLQQFPRFINH, NGRAPIHIACMNDYYQCLSLLIGVGADLWV, and NGDTPLHVCLEYGSISCMKMLLNEGEVSLDD. The tract at residues 259–302 is disordered; sequence STHTTSGNGGNRRSSITNPVFNPRKPTLSTDSFSSSSNSSSRLR. Positions 260-278 are enriched in polar residues; it reads THTTSGNGGNRRSSITNPV. Residues 285 to 302 are compositionally biased toward low complexity; the sequence is TLSTDSFSSSSNSSSRLR. Phosphoserine is present on residues Ser-315 and Ser-350. Positions 350–359 are enriched in polar residues; that stretch reads SNDNVRGDSQ. Positions 350 to 392 are disordered; it reads SNDNVRGDSQTATINDDGGGGNGGDATIGMGLRKDPDDENENK. Residues 366-375 are compositionally biased toward gly residues; sequence DGGGGNGGDA. Basic and acidic residues predominate over residues 381 to 392; it reads LRKDPDDENENK.

In terms of assembly, the target of rapamycin complex 2 (TORC2) is composed of at least AVO1, AVO2, BIT61, LST8, TOR2 and TSC11. TORC2 forms a homodimer. Contrary to TORC1, TORC2 does not bind to and is not sensitive to FKBP-rapamycin. AVO2 is peripherally associated to AVO1 and TSC11.

The protein localises to the cell membrane. It localises to the vacuole membrane. Component of TORC2, which regulates cell cycle-dependent polarization of the actin-cytoskeleton and cell wall integrity. TORC2 controls polarity of the actin cytoskeleton, which is required for orienting the secretory pathway toward discrete growth sites, via the RHO1/PKC1/MAPK cell integrity pathway. The chain is Target of rapamycin complex 2 subunit AVO2 (AVO2) from Saccharomyces cerevisiae (strain ATCC 204508 / S288c) (Baker's yeast).